Here is a 636-residue protein sequence, read N- to C-terminus: Chaperone protein HtpG (636 aa).

Residues 1 to 344 (MTMSVETQKE…SNDLSLNVSR (344 aa)) are a; substrate-binding. The interval 345 to 561 (EILQKDPIID…EQDLGMQMRQ (217 aa)) is b. The interval 562–636 (ILEASGQKVP…LNKLLVELSV (75 aa)) is c.

The protein belongs to the heat shock protein 90 family. Homodimer.

Its subcellular location is the cytoplasm. Its function is as follows. Molecular chaperone. Has ATPase activity. In Pseudomonas fluorescens (strain SBW25), this protein is Chaperone protein HtpG.